The chain runs to 428 residues: Leucine-rich repeat-containing protein 42 (428 aa).

5 LRR repeats span residues 149–170 (VLCS…EEIK), 174–195 (ELTC…LEHL), 202–222 (SVTQ…RKMT), 234–255 (NLTL…GYLF), and 259–280 (KLNC…KHKL). A disordered region spans residues 379–412 (KHEAISSQESKKSKKRPFEESETEQNNSSQPSKQ). Residues Ser406 and Ser407 each carry the phosphoserine modification.

The protein belongs to the LRRC42 family.

This Homo sapiens (Human) protein is Leucine-rich repeat-containing protein 42 (LRRC42).